The following is a 65-amino-acid chain: Large ribosomal subunit protein bL35 (65 aa).

A disordered region spans residues 30 to 65 (AFRSHLAQNKSTKQKRQSKHGTFMHPTDYKRLKDLM). The segment covering 56 to 65 (TDYKRLKDLM) has biased composition (basic and acidic residues).

It belongs to the bacterial ribosomal protein bL35 family.

This is Large ribosomal subunit protein bL35 from Mycoplasma mobile (strain ATCC 43663 / 163K / NCTC 11711) (Mesomycoplasma mobile).